Here is a 192-residue protein sequence, read N- to C-terminus: Potassium channel HX13_20290 (192 aa).

The helical transmembrane segment at 1–24 (MTKGRLEAFSDGVLAIIITIMVLE) threads the bilayer. A RxxxFSD motif motif is present at residues 5–11 (RLEAFSD). Residue Leu-25 is a topological domain, cytoplasmic. The interval 26-29 (KVPE) is short helix H1. The Extracellular segment spans residues 26–39 (KVPEGSSWASLQPI). The short helix H2 stretch occupies residues 31 to 37 (SSWASLQ). Residues 40-65 (LPRFLAYIFSFIYVGIYWNNHHHLFQ) traverse the membrane as a helical segment. The Cytoplasmic portion of the chain corresponds to 66–71 (TVKKVN). A helical transmembrane segment spans residues 72–93 (GSILWANLHLLFWLSLMPIATE). Residues 94–101 (WIGTSHFA) are Extracellular-facing. A helical transmembrane segment spans residues 102-126 (QNPVATYGIGLIMSAIAYTILENVI). Topologically, residues 127–133 (IRCEGEN) are cytoplasmic. Residues 134-162 (SKLKEAIHSKFKEYISIIFYVLGIATSFF) form a helical membrane-spanning segment. At 163–164 (YP) the chain is on the extracellular side. Residues 165–180 (YIAIGFYYLVALIWLI) traverse the membrane as a helical segment. The Cytoplasmic portion of the chain corresponds to 181 to 192 (PDKRIEKSLKEN).

It belongs to the TMEM175 family. As to quaternary structure, homotetramer.

It localises to the membrane. The enzyme catalyses K(+)(in) = K(+)(out). Potassium channel. The chain is Potassium channel HX13_20290 from Chryseobacterium sp. (strain P1-3).